The following is a 196-amino-acid chain: Interleukin-18 (196 aa).

Positions 1 to 29 (MSCEEIAVCAVRLRENLCLYFEELECDAF) are excised as a propeptide.

It belongs to the IL-1 family. Forms a ternary complex with ligand-binding receptor subunit IL18R1 and signaling receptor subunit IL18RAP at the plasma membrane. Mature IL18 first binds to IL18R1 forming a low affinity binary complex, which then interacts with IL18RAP to form a high affinity ternary complex that signals inside the cell. Interacts with cargo receptor TMED10; the interaction mediates the translocation from the cytoplasm into the ERGIC (endoplasmic reticulum-Golgi intermediate compartment) and thereby secretion. In terms of processing, the pro-IL-18 precursor is processed by CASP1 or CASP4 to yield the active form.

The protein resides in the cytoplasm. The protein localises to the secreted. Its function is as follows. Augments natural killer cell activity in spleen cells and stimulates interferon gamma production in T-helper type I cells. Involved in transduction of inflammation downstream of pyroptosis: its mature form is specifically released in the extracellular milieu by passing through the gasdermin-D (GSDMD) pore. In Gallus gallus (Chicken), this protein is Interleukin-18 (IL18).